Consider the following 256-residue polypeptide: Pyridoxine 5'-phosphate synthase (256 aa).

Asn12 contacts 3-amino-2-oxopropyl phosphate. Position 14-15 (14-15 (DH)) interacts with 1-deoxy-D-xylulose 5-phosphate. Residue Arg23 coordinates 3-amino-2-oxopropyl phosphate. The Proton acceptor role is filled by His48. 2 residues coordinate 1-deoxy-D-xylulose 5-phosphate: Arg50 and His55. Glu75 acts as the Proton acceptor in catalysis. Thr105 contacts 1-deoxy-D-xylulose 5-phosphate. His199 functions as the Proton donor in the catalytic mechanism. Residues Gly200 and 221–222 (GY) contribute to the 3-amino-2-oxopropyl phosphate site.

Belongs to the PNP synthase family. Homooctamer; tetramer of dimers.

It localises to the cytoplasm. The enzyme catalyses 3-amino-2-oxopropyl phosphate + 1-deoxy-D-xylulose 5-phosphate = pyridoxine 5'-phosphate + phosphate + 2 H2O + H(+). It functions in the pathway cofactor biosynthesis; pyridoxine 5'-phosphate biosynthesis; pyridoxine 5'-phosphate from D-erythrose 4-phosphate: step 5/5. Its function is as follows. Catalyzes the complicated ring closure reaction between the two acyclic compounds 1-deoxy-D-xylulose-5-phosphate (DXP) and 3-amino-2-oxopropyl phosphate (1-amino-acetone-3-phosphate or AAP) to form pyridoxine 5'-phosphate (PNP) and inorganic phosphate. The protein is Pyridoxine 5'-phosphate synthase of Bradyrhizobium sp. (strain ORS 278).